We begin with the raw amino-acid sequence, 436 residues long: MHIVVVGLSHRTAPVEVREKLSIPDQSITESLKALKAFSDVLEVSILSTCNRLEIYALVKDKNTGISSIKEFISEYSGIIFDDLNPHLFCFRQEEAVLHLMKVSAGLDSLVLGEGQILSQVKKMMRLGQENQSTGPILNRLLTQSVSTGKKVRSETNLGTGAVSISSAAVELAQLKIGQEKGFDNLVSLESENVLVVGAGRMSRLLITHLKSKGCHKLILLNRNIDRALNLAQDFPDLEIVCKGLNELEENISLSSLVFTSTASEEPIIDLTKIEKINLSNRLKFIDIGVPRNISNDVKQHEFVKSFDVDDLQEVVSRNQEFRQKIAKEAESLVEEERIIFLEWWASLEAVPVINKLRSDLELIRKEELQKALSRMGPDFSARERKVVEALTKGIINKILHTPVTKLRSPQSREERQVSLKIVEKLFSLVEEDKNN.

Substrate-binding positions include 49–52 (TCNR), Ser-109, 114–116 (EGQ), and Gln-120. The active-site Nucleophile is Cys-50. 198-203 (GAGRMS) is a binding site for NADP(+).

This sequence belongs to the glutamyl-tRNA reductase family. As to quaternary structure, homodimer.

The enzyme catalyses (S)-4-amino-5-oxopentanoate + tRNA(Glu) + NADP(+) = L-glutamyl-tRNA(Glu) + NADPH + H(+). It participates in porphyrin-containing compound metabolism; protoporphyrin-IX biosynthesis; 5-aminolevulinate from L-glutamyl-tRNA(Glu): step 1/2. The protein operates within porphyrin-containing compound metabolism; chlorophyll biosynthesis. Functionally, catalyzes the NADPH-dependent reduction of glutamyl-tRNA(Glu) to glutamate 1-semialdehyde (GSA). The sequence is that of Glutamyl-tRNA reductase from Prochlorococcus marinus (strain MIT 9301).